Consider the following 154-residue polypeptide: 17 kDa surface antigen (154 aa).

Residues 1–19 form the signal peptide; sequence MKLLSKIMIIALAASMLQA. C20 carries the N-palmitoyl cysteine lipid modification. The S-diacylglycerol cysteine moiety is linked to residue C20.

The protein belongs to the rickettsiale 17 kDa surface antigen family.

It is found in the cell outer membrane. The chain is 17 kDa surface antigen (omp) from Rickettsia montanensis.